We begin with the raw amino-acid sequence, 225 residues long: Heptaprenylglyceryl phosphate synthase (225 aa).

Position 6 (Lys6) interacts with sn-glycerol 1-phosphate. The Mg(2+) site is built by Asp8 and Thr34. Residues 153 to 158 (YVEYSG), Gly183, and 203 to 204 (GN) each bind sn-glycerol 1-phosphate.

This sequence belongs to the GGGP/HepGP synthase family. Group I subfamily. In terms of assembly, homodimer. Mg(2+) is required as a cofactor.

The enzyme catalyses sn-glycerol 1-phosphate + all-trans-heptaprenyl diphosphate = 3-heptaprenyl-sn-glycero-1-phosphate + diphosphate. Its pathway is membrane lipid metabolism; glycerophospholipid metabolism. Its function is as follows. Prenyltransferase that catalyzes in vivo the transfer of the heptaprenyl moiety of heptaprenyl pyrophosphate (HepPP; 35 carbon atoms) to the C3 hydroxyl of sn-glycerol-1-phosphate (G1P), producing heptaprenylglyceryl phosphate (HepGP). This reaction is an ether-bond-formation step in the biosynthesis of archaea-type G1P-based membrane lipids found in Bacillales. To a much lesser extent, is also able to use geranylgeranyl diphosphate (GGPP; C20) as the prenyl donor. This Listeria monocytogenes serovar 1/2a (strain ATCC BAA-679 / EGD-e) protein is Heptaprenylglyceryl phosphate synthase.